A 313-amino-acid polypeptide reads, in one-letter code: Endo-beta-N-acetylglucosaminidase H (313 aa).

The or 44 signal peptide spans 1-42 (MFTPVRRRVRTAALALSAAAALVLGSTAASGASATPSPAPAP). Residues 51–307 (PTSVAYVEVN…SAFTRELYGS (257 aa)) enclose the GH18 domain. Glu-174 (proton donor) is an active-site residue.

It belongs to the glycosyl hydrolase 18 family.

It catalyses the reaction an N(4)-(oligosaccharide-(1-&gt;3)-[oligosaccharide-(1-&gt;6)]-beta-D-Man-(1-&gt;4)-beta-D-GlcNAc-(1-&gt;4)-alpha-D-GlcNAc)-L-asparaginyl-[protein] + H2O = an oligosaccharide-(1-&gt;3)-[oligosaccharide-(1-&gt;6)]-beta-D-Man-(1-&gt;4)-D-GlcNAc + N(4)-(N-acetyl-beta-D-glucosaminyl)-L-asparaginyl-[protein]. Cleaves asparagine-linked oligomannose and hybrid, but not complex, oligosaccharides from glycoproteins. In Streptomyces plicatus, this protein is Endo-beta-N-acetylglucosaminidase H.